The following is a 290-amino-acid chain: Energy-coupling factor transporter ATP-binding protein EcfA2 (290 aa).

One can recognise an ABC transporter domain in the interval 6 to 246; sequence EKVEHVYNAR…ADKLAAIGLS (241 aa). 40–47 lines the ATP pocket; sequence GHTGSGKS.

This sequence belongs to the ABC transporter superfamily. Energy-coupling factor EcfA family. As to quaternary structure, forms a stable energy-coupling factor (ECF) transporter complex composed of 2 membrane-embedded substrate-binding proteins (S component), 2 ATP-binding proteins (A component) and 2 transmembrane proteins (T component).

The protein localises to the cell membrane. In terms of biological role, ATP-binding (A) component of a common energy-coupling factor (ECF) ABC-transporter complex. Unlike classic ABC transporters this ECF transporter provides the energy necessary to transport a number of different substrates. This chain is Energy-coupling factor transporter ATP-binding protein EcfA2, found in Geobacillus kaustophilus (strain HTA426).